The chain runs to 209 residues: Pyridoxine/pyridoxamine 5'-phosphate oxidase (209 aa).

Residues 7–10 and Lys64 each bind substrate; that span reads REDY. FMN-binding positions include 59 to 64, 74 to 75, Arg80, and Lys81; these read RIVLLK and FT. Tyr121, Arg125, and Ser129 together coordinate substrate. Residues 138–139 and Trp182 contribute to the FMN site; that span reads QS. 188–190 is a substrate binding site; the sequence is RLH. Arg192 lines the FMN pocket.

Belongs to the pyridoxamine 5'-phosphate oxidase family. As to quaternary structure, homodimer. FMN serves as cofactor.

The catalysed reaction is pyridoxamine 5'-phosphate + O2 + H2O = pyridoxal 5'-phosphate + H2O2 + NH4(+). The enzyme catalyses pyridoxine 5'-phosphate + O2 = pyridoxal 5'-phosphate + H2O2. The protein operates within cofactor metabolism; pyridoxal 5'-phosphate salvage; pyridoxal 5'-phosphate from pyridoxamine 5'-phosphate: step 1/1. Its pathway is cofactor metabolism; pyridoxal 5'-phosphate salvage; pyridoxal 5'-phosphate from pyridoxine 5'-phosphate: step 1/1. Its function is as follows. Catalyzes the oxidation of either pyridoxine 5'-phosphate (PNP) or pyridoxamine 5'-phosphate (PMP) into pyridoxal 5'-phosphate (PLP). The sequence is that of Pyridoxine/pyridoxamine 5'-phosphate oxidase from Actinobacillus pleuropneumoniae serotype 5b (strain L20).